We begin with the raw amino-acid sequence, 289 residues long: Survival motor neuron protein (289 aa).

Over residues 1–10 (MAMGSGGGAG) the composition is skewed to gly residues. Residues 1-27 (MAMGSGGGAGSEQEDTVLFRRGTGQSD) form a disordered region. The tract at residues 11–42 (SEQEDTVLFRRGTGQSDDSDIWDDTALIKAYD) is P1 (binding site for GEMIN2). Phosphothreonine is present on T23. 2 positions are modified to phosphoserine: S26 and S29. Residue K49 forms a Glycyl lysine isopeptide (Lys-Gly) (interchain with G-Cter in SUMO2) linkage. The interval 55-88 (GDMCETSDKPKGTARRKPAKKNKNQKKNATAPLK) is disordered. The span at 66–80 (GTARRKPAKKNKNQK) shows a compositional bias: basic residues. T67 is modified (phosphothreonine). In terms of domain architecture, Tudor spans 89–149 (QWKAGDKCSA…LSPTCEVANN (61 aa)). The required for interaction with RPP20/POP7 stretch occupies residues 95-205 (KCSAVWSEDG…VPGAGLGPGK (111 aa)). The disordered stretch occupies residues 150–226 (TEQNTQENES…PPPPPPFLPC (77 aa)). Residues 171–181 (RSLRSKAHSKS) show a composition bias toward basic residues. A Glycyl lysine isopeptide (Lys-Gly) (interchain with G-Cter in SUMO2) cross-link involves residue K205. Pro residues predominate over residues 212-226 (GPPPPPPPPPPFLPC). A P2 (binding site for SM B) region spans residues 235 to 262 (PPIIPPPPPISPDCLDDTDALGSMLISW). The segment at 274–289 (GFRQNKKEGKKCSHTN) is required for interaction with SYNCRIP.

This sequence belongs to the SMN family. In terms of assembly, homooligomer; may form higher order homooligomers in the dimer to octamer range. Part of the core SMN complex that contains SMN1, GEMIN2/SIP1, DDX20/GEMIN3, GEMIN4, GEMIN5, GEMIN6, GEMIN7, GEMIN8 and STRAP/UNRIP. Part of the SMN-Sm complex that contains SMN1, GEMIN2/SIP1, DDX20/GEMIN3, GEMIN4, GEMIN5, GEMIN6, GEMIN7, GEMIN8, STRAP/UNRIP and the Sm proteins SNRPB, SNRPD1, SNRPD2, SNRPD3, SNRPE, SNRPF and SNRPG. Component of an import snRNP complex composed of KPNB1, RNUT1, SMN1 and ZNF259. Interacts with DDX20, FBL, NOLA1, RNUT1 and with several spliceosomal snRNP core Sm proteins, including SNRPB, SNRPD1, SNRPD2, SNRPD3, SNRPE and ILF3. Interacts with GEMIN2; the interaction is direct. Interacts with GEMIN3; the interaction is direct. Interacts with GEMIN8; the interaction is direct. Interacts with SNRPB; the interaction is direct. Interacts (via Tudor domain) with SNRPD1 (via C-terminus); the interaction is direct. Interacts with SNRPD2; the interaction is direct. Interacts (via Tudor domain) with SNRPD3 (via C-terminus); the interaction is direct. Interacts with SNRPE; the interaction is direct. Interacts with OSTF1, LSM10, LSM11 and RPP20/POP7. Interacts (via C-terminal region) with ZPR1 (via C-terminal region). Interacts (via Tudor domain) with COIL. Interacts with SETX; recruits SETX to POLR2A. Interacts with POLR2A (via the C-terminal domain (CTD)). Interacts with PRMT5. Interacts with XRN2. Interacts (via C-terminus) with FMR1 (via C-terminus); the interaction is direct and occurs in a RNA-independent manner. Interacts with SYNCRIP. Interacts (via Tudor domain) with SF3B2 (methylated form). Interacts with WRAP53/TCAB1. Interacts (via Tudor domain) with ELAVL4 in an RNA-independent manner; the interaction is required for localization of ELAVL4 to RNA granules. Interacts with FRG1.

It localises to the nucleus. Its subcellular location is the gem. It is found in the cajal body. The protein localises to the cytoplasm. The protein resides in the cytoplasmic granule. It localises to the perikaryon. Its subcellular location is the cell projection. It is found in the neuron projection. The protein localises to the axon. The protein resides in the myofibril. It localises to the sarcomere. Its subcellular location is the z line. Its function is as follows. The SMN complex catalyzes the assembly of small nuclear ribonucleoproteins (snRNPs), the building blocks of the spliceosome, and thereby plays an important role in the splicing of cellular pre-mRNAs. Most spliceosomal snRNPs contain a common set of Sm proteins SNRPB, SNRPD1, SNRPD2, SNRPD3, SNRPE, SNRPF and SNRPG that assemble in a heptameric protein ring on the Sm site of the small nuclear RNA to form the core snRNP (Sm core). In the cytosol, the Sm proteins SNRPD1, SNRPD2, SNRPE, SNRPF and SNRPG are trapped in an inactive 6S pICln-Sm complex by the chaperone CLNS1A that controls the assembly of the core snRNP. To assemble core snRNPs, the SMN complex accepts the trapped 5Sm proteins from CLNS1A forming an intermediate. Binding of snRNA inside 5Sm ultimately triggers eviction of the SMN complex, thereby allowing binding of SNRPD3 and SNRPB to complete assembly of the core snRNP. Within the SMN complex, SMN1 acts as a structural backbone and together with GEMIN2 it gathers the Sm complex subunits. Ensures the correct splicing of U12 intron-containing genes that may be important for normal motor and proprioceptive neurons development. Also required for resolving RNA-DNA hybrids created by RNA polymerase II, that form R-loop in transcription terminal regions, an important step in proper transcription termination. May also play a role in the metabolism of small nucleolar ribonucleoprotein (snoRNPs). The protein is Survival motor neuron protein (Smn1) of Rattus norvegicus (Rat).